Reading from the N-terminus, the 347-residue chain is Transcription factor JunD (347 aa).

Residues 1–43 (METPFYGDEALSGLGGGASGSGGSFASPGRLFPGAPPTAAAGS) form a disordered region. A compositionally biased stretch (gly residues) spans 13-23 (GLGGGASGSGG). The Menin-binding motif (MBM) signature appears at 27 to 39 (SPGRLFPGAPPTA). The MAP kinase docking motif; essential for its phosphorylation motif lies at 46–55 (KKDALTLSLS). The tract at residues 62 to 86 (LKPAAAPPPTPLRADGAPSAAPPDG) is disordered. Residues 73–86 (LRADGAPSAAPPDG) are compositionally biased toward low complexity. Ser90 carries the post-translational modification Phosphoserine. The residue at position 100 (Ser100) is a Phosphoserine; by MAPK8. A Phosphothreonine modification is found at Thr117. A disordered region spans residues 244–264 (QTVPDVPSFGESPPLSPIDMD). A phosphoserine mark is found at Ser251, Ser255, and Ser259. The basic motif stretch occupies residues 268 to 295 (RIKAERKRLRNRIAASKCRKRKLERISR). One can recognise a bZIP domain in the interval 268-331 (RIKAERKRLR…AQLKQKVLSH (64 aa)). The interval 296–324 (LEEKVKTLKSQNTELASTASLLREQVAQL) is leucine-zipper.

This sequence belongs to the bZIP family. Jun subfamily. In terms of assembly, heterodimer; binds DNA as a heterodimer. Component of an AP-1 transcription factor complex composed of JUN-FOS heterodimers. As part of the AP-1 transcription factor complex, forms heterodimers with FOS proteins, thereby binding to the AP-1 consensus sequence and stimulating transcription. Forms heterodimers with FOSB; thereby binding to the AP-1 consensus sequence. Interacts (via MBM motif) with MEN1; this interaction represses transcriptional activation. Interacts with MAPK10; this interaction is inhibited in the presence of MEN1. Post-translationally, phosphorylated by MAP kinases MAPK8 and MAPK10; phosphorylation is inhibited in the presence of MEN1.

The protein localises to the nucleus. In terms of biological role, transcription factor binding AP-1 sites. Heterodimerizes with proteins of the FOS family to form an AP-1 transcription factor complex, thereby enhancing their DNA binding activity to an AP-1 consensus sequence 3'-TGA[GC]TCA-5' and enhancing their transcriptional activity. In Homo sapiens (Human), this protein is Transcription factor JunD (JUND).